Consider the following 264-residue polypeptide: Ribosomal RNA small subunit methyltransferase A (264 aa).

S-adenosyl-L-methionine-binding residues include His15, Leu17, Gly42, Glu63, Asp88, and Asn109.

Belongs to the class I-like SAM-binding methyltransferase superfamily. rRNA adenine N(6)-methyltransferase family. RsmA subfamily.

The protein localises to the cytoplasm. It catalyses the reaction adenosine(1518)/adenosine(1519) in 16S rRNA + 4 S-adenosyl-L-methionine = N(6)-dimethyladenosine(1518)/N(6)-dimethyladenosine(1519) in 16S rRNA + 4 S-adenosyl-L-homocysteine + 4 H(+). Specifically dimethylates two adjacent adenosines (A1518 and A1519) in the loop of a conserved hairpin near the 3'-end of 16S rRNA in the 30S particle. May play a critical role in biogenesis of 30S subunits. This is Ribosomal RNA small subunit methyltransferase A from Nitrosococcus oceani (strain ATCC 19707 / BCRC 17464 / JCM 30415 / NCIMB 11848 / C-107).